The following is a 979-amino-acid chain: Receptor-type tyrosine-protein phosphatase-like N (979 aa).

Positions 1–37 are cleaved as a signal peptide; sequence MRRPRRPGGSGGSGGSGGLRLLVCLLLLSGRPGGCSA. Positions 38–134 are RESP18 homology domain; it reads ISAHGCLFDR…HPRDRSGLVP (97 aa). Residues 38 to 575 are Lumenal-facing; that stretch reads ISAHGCLFDR…RQAHGISPMR (538 aa). Cys56 and Cys65 are oxidised to a cystine. Basic and acidic residues predominate over residues 113 to 130; the sequence is MERIPRLRPPEPHPRDRS. Disordered regions lie at residues 113–173, 289–330, and 392–443; these read MERI…GSPL, GRAR…AAQP, and MQRG…SSSV. A compositionally biased stretch (polar residues) spans 145–155; it reads TQGNPTGSSPA. Residues 303–322 are compositionally biased toward basic and acidic residues; it reads RAEDSSEGHEEEVLGGRGEK. A phosphoserine mark is found at Ser307 and Ser308. The segment covering 414 to 424 has biased composition (polar residues); the sequence is SPASSEVQQVL. The tract at residues 449 to 575 is sufficient for dimerization of proICA512; the sequence is SPLGQSQPTV…RQAHGISPMR (127 aa). N-linked (GlcNAc...) asparagine glycosylation is found at Asn506 and Asn524. Residues 576-600 form a helical membrane-spanning segment; sequence SVLLTLVALAGVAGLLVALAVALCM. The segment at 601–732 is sufficient for dimerization of proICA512; sequence RHHSRQRDKE…PNTCAAAQDE (132 aa). The Cytoplasmic segment spans residues 601–979; the sequence is RHHSRQRDKE…VNAILKALPQ (379 aa). Residues 644 to 680 are disordered; that stretch reads RAEGQPEPSRVSSVSSQFSDAAQASPSSHSSTPSWCE. The span at 648–677 shows a compositional bias: low complexity; the sequence is QPEPSRVSSVSSQFSDAAQASPSSHSSTPS. Residues 709 to 969 form the Tyrosine-protein phosphatase domain; it reads LAKEWQALCA…EFALTAVAEE (261 aa). Residue Lys754 forms a Glycyl lysine isopeptide (Lys-Gly) (interchain with G-Cter in SUMO) linkage.

This sequence belongs to the protein-tyrosine phosphatase family. Receptor class 8 subfamily. Homodimer; shown for the unprocessed protein (proICA512) in the endoplasmic reticulum and resolved during protein maturation as ICA512-TMF seems to be predominantly monomeric in secretory granules; however, ICA512-CCF interacts with ICA512-TMF disrupting the ICA512-TMF:SNTB2 complex. The isolated lumenal RESP18 homology domain has been shown to form disulfide-linked homooligomers. Interacts (via cytoplasmic domain) with phosphorylated SNTB2; this protects PTPRN against cleavage by CAPN1 to produce ICA512-CCF. Dephosphorylation of SNTB2 upon insulin stimulation disrupts the interaction and results in PTPRN cleavage. Interacts with SNX19. ICA512-CCF interacts with PIAS4; in the nucleus. Interacts with STAT5B (phosphorylated); down-regulated by ICA512-CCF sumoylation; ICA512-CCF prevents STAT5B dephosphorylation; ICA512-CCF mediates interaction of STAT5B with PIAS4. Interacts (via RESP18 homology domain) with insulin and proinsulin. Interacts with PTPRN2, PTPRA and PTPRE. Subject to proteolytic cleavage at multiple sites. Subject to cleavage on a pair of basic residues. On exocytosis of secretory granules in pancreatic beta-cells ICA512-TMF is transiently inserted in the plasma-membrane and cleaved by mu-type calpain CPN1 to yield ICA512-CCF. Post-translationally, O-glycosylated. In terms of processing, N-glycosylated. Sumoylated at two sites including Lys-754. Sumoylation decreases interaction with STAT5. Detected in pituitary. Detected in brain (at protein level). Detected in brain. Weakly expressed in the colon, intestine, stomach and pancreas.

The protein localises to the membrane. It localises to the cytoplasmic vesicle. The protein resides in the secretory vesicle membrane. It is found in the perikaryon. Its subcellular location is the cell projection. The protein localises to the axon. It localises to the synapse. The protein resides in the cell membrane. It is found in the endosome. Its subcellular location is the nucleus. Its function is as follows. Plays a role in vesicle-mediated secretory processes. Required for normal accumulation of secretory vesicles in hippocampus, pituitary and pancreatic islets. Required for the accumulation of normal levels of insulin-containing vesicles and preventing their degradation. Plays a role in insulin secretion in response to glucose stimuli. Required for normal accumulation of the neurotransmitters norepinephrine, dopamine and serotonin in the brain. In females, but not in males, required for normal accumulation and secretion of pituitary hormones, such as luteinizing hormone (LH) and follicle-stimulating hormone (FSH). Seems to lack intrinsic enzyme activity. Required to maintain normal levels of renin expression and renin release. May regulate catalytic active protein-tyrosine phosphatases such as PTPRA through dimerization. In terms of biological role, ICA512-TMF regulates dynamics and exocytosis of insulin secretory granules (SGs); binding of ICA512-TMF to SNTB2/beta-2-syntrophin is proposed to restrain SGs mobility and exocytosis by tethering them to the actin cytoskeleton depending on UTRN; the function is inhibited by cytoplasmic ICA512-CFF dimerizing with ICA512-TMF and displacing SNTB2. ICA512-CCF translocated to the nucleus promotes expression of insulin and other granule-related genes; the function implicates binding to and regulating activity of STAT5B probably by preventing its dephosphorylation and potentially by inducing its sumoylation by recruiting PIAS4. Enhances pancreatic beta-cell proliferation by converging with signaling by STAT5B and STAT3. ICA512-CCF located in the cytoplasm regulates dynamics and exocytosis of insulin secretory granules (SGs) by dimerizing with ICA512-TMF and displacing SNTB2 thus enhancing SGs mobility and exocytosis. The chain is Receptor-type tyrosine-protein phosphatase-like N (Ptprn) from Mus musculus (Mouse).